A 326-amino-acid polypeptide reads, in one-letter code: Eukaryotic translation initiation factor 2 subunit 1 (326 aa).

Residues 24 to 95 (DDLIMVKVNR…QKGYIDLSKR (72 aa)) enclose the S1 motif domain. At Ser-59 the chain carries Phosphoserine; by eIK1, eIK2 and PK4. A disordered region spans residues 291–326 (LDKHDGLSSDDEYSSDGDEDDSSNDDDNSSDEDDDD). The span at 298 to 326 (SSDDEYSSDGDEDDSSNDDDNSSDEDDDD) shows a compositional bias: acidic residues.

This sequence belongs to the eIF-2-alpha family. Phosphorylates at Ser-59 in mature trophozoites, schizonts and gametocytes but not in rings and young trophozoites. Phosphorylates at Ser-59 by eIK2 in salivary gland sporozoites but not in midgut and hemocoel sporozoites. Dephosphorylated at Ser-59 by UIS2. Phosphorylation of eIF2alpha subunit of the pre-initiation complex eIF2 inhibits recycling of inactive eIF2-GDP to active eIF2-GTP by limiting the activity of the guanine nucleotide exchange factor eIF2B and thus, inhibits protein translation.

It localises to the cytoplasm. The protein localises to the stress granule. Its function is as follows. Functions in the early steps of protein synthesis by forming a ternary complex with GTP and initiator tRNA. May regulate protein translation in response to amino acid starvation. May regulate protein at various stages of parasite development. The polypeptide is Eukaryotic translation initiation factor 2 subunit 1 (Plasmodium berghei (strain Anka)).